The following is a 262-amino-acid chain: Small ribosomal subunit protein uS2 (262 aa).

The tract at residues 223–262 (KSLLEQDGGEQAAGEEVSQDEKDAVVAEAMSEEDFGEDEE) is disordered. Low complexity predominate over residues 227–238 (EQDGGEQAAGEE). Positions 252-262 (MSEEDFGEDEE) are enriched in acidic residues.

This sequence belongs to the universal ribosomal protein uS2 family.

The chain is Small ribosomal subunit protein uS2 from Campylobacter concisus (strain 13826).